Consider the following 993-residue polypeptide: MGMRPPAGLPSLSKRSRVLLVLALVVAALLLVGPRLISTYTDWLWFGEVGFRGVFTTVLVTRLLLFLVVGVVVGGIVWLALLLAYRSRPVFVPVSGPNDPVARYRTTVMTRLRLFGLAIPIAVGLLAGLIAQSSWVTVQLFVNGGSFGVADPEFGLDVGFYTFDLPFYRFVLNWLFVAVLLAFFASLVTHYIFGGLKLAGRGGALTNAARVQLAVLAGTFILLKAVAYWFDRYSLLSSSRKEPTFTGGSYTDMNAVLQAKLILLAIAVICAGAFFAAIFLRDLRIPAMATALLVLSSILVGAVWPLVVEQFSVRPNAADKESAYIERNIAATRQAYGITDDKVEYQDYQGYGTTPPRDVPADVTTIANTRLLDPNILSRTFTQQQQLKNFYGFPPTLDIDRYDIDGEMRDYIVAARELSSKSLTGNQTDWINKHTVYTHGNGLVAAPANRVNAAAGESAEEAANSNSGYPVYMVSDIASQAAGDQVIPVEQPRIYYGEVIADTDADYAIVGGSEGSDPREYDTDTSRYTYTGSGGVPIGNWFNRLAFAAKYTERNILFSGAIGSDSKIIYNRDPRDRVTHVAPWLTADGDSYPAVVDGKVVWIVDAYTTLQDYPYAQRSSLDGLVEDSIDQNTGRLLPRKEVSYIRNSVKATVDAYDGTVKLYQVDQNDPVLDAWMGVFPDAVQPADSIPDELRAHFRYPEDLFKVQREMLAKYHVDDPKEFFTNNAFWSVPSDPTIDTSANQPPYYVLVGDPETGKPSFNLTSAMVGYSREFLSAYLSVKSDPENYGKFTVLQLPTDTQTQGPQQTQNSMISDPRVASERTLLERSNKIQYGNLLTLPIANGGILYVEPMYTERSSTGPNTSTFPQLSRVLVSYREPPPSNSVRVGYAPTLAQALDQVFGAGTGSVATAPSAEEGTPPETGTTPPVEQGAAPPAPTAPATPPSGTDVSAAVAELDASLDALTAAQRSGDFAAYGAALARVQKAVAAYEAIPK.

A run of 7 helical transmembrane segments spans residues 18 to 38 (VLLVLALVVAALLLVGPRLIS), 63 to 83 (LLLFLVVGVVVGGIVWLALLL), 114 to 134 (LFGLAIPIAVGLLAGLIAQSS), 174 to 194 (WLFVAVLLAFFASLVTHYIFG), 211 to 231 (VQLAVLAGTFILLKAVAYWFD), 260 to 280 (KLILLAIAVICAGAFFAAIFL), and 288 to 308 (MATALLVLSSILVGAVWPLVV). Residues 904–948 (TGSVATAPSAEEGTPPETGTTPPVEQGAAPPAPTAPATPPSGTDV) are disordered. Low complexity predominate over residues 908–926 (ATAPSAEEGTPPETGTTPP). A compositionally biased stretch (pro residues) spans 933-942 (PPAPTAPATP).

Belongs to the UPF0182 family.

The protein localises to the cell membrane. The protein is UPF0182 protein ROP_64500 of Rhodococcus opacus (strain B4).